A 466-amino-acid polypeptide reads, in one-letter code: 55 kDa erythrocyte membrane protein (466 aa).

Threonine 2 is subject to N-acetylthreonine. Phosphoserine occurs at positions 13 and 19. Threonine 49 carries the phosphothreonine modification. Residues serine 52, serine 57, and serine 110 each carry the phosphoserine modification. In terms of domain architecture, PDZ spans 71–152; sequence LIQFEKVTEE…MISLKVIPNQ (82 aa). Residues 158–228 form the SH3 domain; it reads ALQMFMRAQF…PSPELQEWRV (71 aa). A Phosphoserine modification is found at serine 243. Residues 268-466 are interaction with PALS1; it reads VVSYEEVVRL…PQWVPVSWVY (199 aa). The Guanylate kinase-like domain occupies 282–451; it reads RKTLVLIGAS…TLKKLQEAFD (170 aa).

It belongs to the MAGUK family. Heterodimer with PALS1. Interacts with DLG5 and NF2. Interacts (via guanylate kinase-like domain) with WHRN (via third PDZ domain). In terms of processing, palmitoylated. Ubiquitous.

It is found in the cell membrane. The protein localises to the cell projection. Its subcellular location is the stereocilium. In terms of biological role, essential regulator of neutrophil polarity. Regulates neutrophil polarization by regulating AKT1 phosphorylation through a mechanism that is independent of PIK3CG activity. The polypeptide is 55 kDa erythrocyte membrane protein (MPP1) (Homo sapiens (Human)).